The primary structure comprises 182 residues: Glycerol-3-phosphate acyltransferase 1 (182 aa).

Helical transmembrane passes span 5–25, 54–74, 81–101, 117–137, and 157–177; these read MQFL…AYIV, GYFI…VAVA, PTFV…PVLF, IAFD…FYLI, and ILYS…VLIL.

The protein belongs to the PlsY family. Probably interacts with PlsX.

The protein resides in the cell membrane. It catalyses the reaction an acyl phosphate + sn-glycerol 3-phosphate = a 1-acyl-sn-glycero-3-phosphate + phosphate. It participates in lipid metabolism; phospholipid metabolism. Functionally, catalyzes the transfer of an acyl group from acyl-phosphate (acyl-PO(4)) to glycerol-3-phosphate (G3P) to form lysophosphatidic acid (LPA). This enzyme utilizes acyl-phosphate as fatty acyl donor, but not acyl-CoA or acyl-ACP. The sequence is that of Glycerol-3-phosphate acyltransferase 1 from Bacillus cereus (strain ATCC 14579 / DSM 31 / CCUG 7414 / JCM 2152 / NBRC 15305 / NCIMB 9373 / NCTC 2599 / NRRL B-3711).